A 261-amino-acid chain; its full sequence is uncharacterized protein (261 aa).

A divalent metal cation contacts are provided by H7, H9, E96, H132, H156, and D211.

It belongs to the metallo-dependent hydrolases superfamily. TatD-type hydrolase family. The cofactor is a divalent metal cation.

This is an uncharacterized protein from Mycoplasma pneumoniae (strain ATCC 29342 / M129 / Subtype 1) (Mycoplasmoides pneumoniae).